We begin with the raw amino-acid sequence, 271 residues long: ATP synthase subunit a (271 aa).

The next 5 membrane-spanning stretches (helical) occupy residues 38-58, 100-120, 146-166, 220-240, and 242-262; these read FWTLNIDSMFFSVVLGLLFLA, LIAPLALTVFVWVFLMNLMDL, DVNITLSMALGVFILILFYSI, LIFILIAGLLPWWSQWILNVP, and AIFHILIITLQAFIFMVLTIV.

The protein belongs to the ATPase A chain family. F-type ATPases have 2 components, CF(1) - the catalytic core - and CF(0) - the membrane proton channel. CF(1) has five subunits: alpha(3), beta(3), gamma(1), delta(1), epsilon(1). CF(0) has three main subunits: a(1), b(2) and c(9-12). The alpha and beta chains form an alternating ring which encloses part of the gamma chain. CF(1) is attached to CF(0) by a central stalk formed by the gamma and epsilon chains, while a peripheral stalk is formed by the delta and b chains.

The protein localises to the cell inner membrane. Functionally, key component of the proton channel; it plays a direct role in the translocation of protons across the membrane. The polypeptide is ATP synthase subunit a (Enterobacter sp. (strain 638)).